The chain runs to 293 residues: Putative DNA glycosylase At3g47830 (293 aa).

Basic residues predominate over residues 1 to 10 (MSKAQKRKRL). The disordered stretch occupies residues 1-34 (MSKAQKRKRLNKYDGESKTPANKSTVDGGNPYPT). N108 and K151 together coordinate DNA. K196 serves as the catalytic Schiff-base intermediate with DNA. H216 and D232 together coordinate DNA.

The protein belongs to the DNA glycosylase family.

The polypeptide is Putative DNA glycosylase At3g47830 (Arabidopsis thaliana (Mouse-ear cress)).